The primary structure comprises 678 residues: RxLR effector protein PITG_16705 (678 aa).

The N-terminal stretch at 1 to 20 (MHLFFLTAVAFVITSVSVDA) is a signal peptide. A RxLR-dEER motif is present at residues 46-61 (RLLRKNSTVDLVGEER).

This sequence belongs to the RxLR effector family.

The protein resides in the secreted. It localises to the host cytoplasm. Functionally, effector that enhances P.infestans colonization of Nicotiana benthamiana leaves. The protein is RxLR effector protein PITG_16705 of Phytophthora infestans (strain T30-4) (Potato late blight agent).